The primary structure comprises 284 residues: 4-hydroxy-3-methylbut-2-enyl diphosphate reductase (284 aa).

Residue C12 participates in [4Fe-4S] cluster binding. Residues H40 and H72 each contribute to the (2E)-4-hydroxy-3-methylbut-2-enyl diphosphate site. Residues H40 and H72 each coordinate dimethylallyl diphosphate. H40 and H72 together coordinate isopentenyl diphosphate. Residue C94 coordinates [4Fe-4S] cluster. H122 is a binding site for (2E)-4-hydroxy-3-methylbut-2-enyl diphosphate. A dimethylallyl diphosphate-binding site is contributed by H122. H122 lines the isopentenyl diphosphate pocket. The active-site Proton donor is E124. T161 contributes to the (2E)-4-hydroxy-3-methylbut-2-enyl diphosphate binding site. C193 lines the [4Fe-4S] cluster pocket. S221, N223, and S264 together coordinate (2E)-4-hydroxy-3-methylbut-2-enyl diphosphate. Residues S221, N223, and S264 each coordinate dimethylallyl diphosphate. Isopentenyl diphosphate contacts are provided by S221, N223, and S264.

Belongs to the IspH family. Requires [4Fe-4S] cluster as cofactor.

The catalysed reaction is isopentenyl diphosphate + 2 oxidized [2Fe-2S]-[ferredoxin] + H2O = (2E)-4-hydroxy-3-methylbut-2-enyl diphosphate + 2 reduced [2Fe-2S]-[ferredoxin] + 2 H(+). It catalyses the reaction dimethylallyl diphosphate + 2 oxidized [2Fe-2S]-[ferredoxin] + H2O = (2E)-4-hydroxy-3-methylbut-2-enyl diphosphate + 2 reduced [2Fe-2S]-[ferredoxin] + 2 H(+). It functions in the pathway isoprenoid biosynthesis; dimethylallyl diphosphate biosynthesis; dimethylallyl diphosphate from (2E)-4-hydroxy-3-methylbutenyl diphosphate: step 1/1. The protein operates within isoprenoid biosynthesis; isopentenyl diphosphate biosynthesis via DXP pathway; isopentenyl diphosphate from 1-deoxy-D-xylulose 5-phosphate: step 6/6. Functionally, catalyzes the conversion of 1-hydroxy-2-methyl-2-(E)-butenyl 4-diphosphate (HMBPP) into a mixture of isopentenyl diphosphate (IPP) and dimethylallyl diphosphate (DMAPP). Acts in the terminal step of the DOXP/MEP pathway for isoprenoid precursor biosynthesis. The chain is 4-hydroxy-3-methylbut-2-enyl diphosphate reductase from Dehalococcoides mccartyi (strain ATCC BAA-2266 / KCTC 15142 / 195) (Dehalococcoides ethenogenes (strain 195)).